A 330-amino-acid polypeptide reads, in one-letter code: MMWGAGSPLAWLSAGSGNVNVSSVGPAEGPTGPAAPLPSPKAWDVVLCISGTLVSCENALVVAIIVGTPAFRAPMFLLVGSLAVADLLAGLGLVLHFAAVFCIGSAEMSLVLVGVLAMAFTASIGSLLAITVDRYLSLYNALTYYSETTVTRTYVMLALVWGGALGLGLLPVLAWNCLDGLTTCGVVYPLSKNHLVVLAIAFFMVFGIMLQLYAQICRIVCRHAQQIALQRHLLPASHYVATRKGIATLAVVLGAFAACWLPFTVYCLLGDAHSPPLYTYLTLLPATYNSMINPIIYAFRNQDVQKVLWAVCCCCSSSKIPFRSRSPSDV.

At 1–42 (MMWGAGSPLAWLSAGSGNVNVSSVGPAEGPTGPAAPLPSPKA) the chain is on the extracellular side. N-linked (GlcNAc...) asparagine glycosylation is present at N20. A helical transmembrane segment spans residues 43–62 (WDVVLCISGTLVSCENALVV). Residues 63–74 (AIIVGTPAFRAP) are Cytoplasmic-facing. The chain crosses the membrane as a helical span at residues 75-98 (MFLLVGSLAVADLLAGLGLVLHFA). Over 99 to 110 (AVFCIGSAEMSL) the chain is Extracellular. Residues 111 to 132 (VLVGVLAMAFTASIGSLLAITV) form a helical membrane-spanning segment. At 133–153 (DRYLSLYNALTYYSETTVTRT) the chain is on the cytoplasmic side. A helical membrane pass occupies residues 154–173 (YVMLALVWGGALGLGLLPVL). Residues 174-198 (AWNCLDGLTTCGVVYPLSKNHLVVL) lie on the Extracellular side of the membrane. A helical membrane pass occupies residues 199–217 (AIAFFMVFGIMLQLYAQIC). Residues 218-245 (RIVCRHAQQIALQRHLLPASHYVATRKG) are Cytoplasmic-facing. Residues 246-272 (IATLAVVLGAFAACWLPFTVYCLLGDA) traverse the membrane as a helical segment. Residues 273-277 (HSPPL) are Extracellular-facing. A helical transmembrane segment spans residues 278-299 (YTYLTLLPATYNSMINPIIYAF). Topologically, residues 300 to 330 (RNQDVQKVLWAVCCCCSSSKIPFRSRSPSDV) are cytoplasmic. C313 carries S-palmitoyl cysteine lipidation. Phosphoserine is present on residues S324, S326, and S328.

This sequence belongs to the G-protein coupled receptor 1 family. As to expression, expressed predominantly in the central nervous system, and at low levels in the lung, kidney, testis, ovary and eye. Highly expressed in regions of the brain implicated in the Alzheimer disease.

Its subcellular location is the cell membrane. In terms of biological role, constitutively active G-protein coupled receptor that maintains high 3'-5'-cyclic adenosine monophosphate (cAMP) levels that a plays a role in serveral processes including meiotic arrest in oocytes or neuronal development via activation of numerous intracellular signaling pathways. Acts as an essential activator of thermogenic adipocytes and drives thermogenesis via its intrinsic G(s)-coupling activity without the requirement of a ligand. Has a potential role in modulating a number of brain functions, including behavioral responses to stress, amyloid-beta peptide generation in neurons. Stimulates neurite outgrowth in cerebellar granular neurons modulated via PKA, ERK, and most strongly PI3K-mediated signaling pathways. This is G-protein coupled receptor 3 (GPR3) from Homo sapiens (Human).